The primary structure comprises 946 residues: Bifunctional glutamine synthetase adenylyltransferase/adenylyl-removing enzyme (946 aa).

An adenylyl removase region spans residues 1-441; it reads MSLLNDAALH…EFNWVIGDDE (441 aa). Positions 448–946 are adenylyl transferase; that stretch reads DQALSELWAL…VIKIWEKFLD (499 aa).

It belongs to the GlnE family. Mg(2+) serves as cofactor.

The enzyme catalyses [glutamine synthetase]-O(4)-(5'-adenylyl)-L-tyrosine + phosphate = [glutamine synthetase]-L-tyrosine + ADP. It catalyses the reaction [glutamine synthetase]-L-tyrosine + ATP = [glutamine synthetase]-O(4)-(5'-adenylyl)-L-tyrosine + diphosphate. Its function is as follows. Involved in the regulation of glutamine synthetase GlnA, a key enzyme in the process to assimilate ammonia. When cellular nitrogen levels are high, the C-terminal adenylyl transferase (AT) inactivates GlnA by covalent transfer of an adenylyl group from ATP to specific tyrosine residue of GlnA, thus reducing its activity. Conversely, when nitrogen levels are low, the N-terminal adenylyl removase (AR) activates GlnA by removing the adenylyl group by phosphorolysis, increasing its activity. The regulatory region of GlnE binds the signal transduction protein PII (GlnB) which indicates the nitrogen status of the cell. The protein is Bifunctional glutamine synthetase adenylyltransferase/adenylyl-removing enzyme of Psychromonas ingrahamii (strain DSM 17664 / CCUG 51855 / 37).